The sequence spans 348 residues: Phosphate acyltransferase (348 aa).

This sequence belongs to the PlsX family. Homodimer. Probably interacts with PlsY.

It localises to the cytoplasm. The catalysed reaction is a fatty acyl-[ACP] + phosphate = an acyl phosphate + holo-[ACP]. The protein operates within lipid metabolism; phospholipid metabolism. Catalyzes the reversible formation of acyl-phosphate (acyl-PO(4)) from acyl-[acyl-carrier-protein] (acyl-ACP). This enzyme utilizes acyl-ACP as fatty acyl donor, but not acyl-CoA. The protein is Phosphate acyltransferase of Oenococcus oeni (strain ATCC BAA-331 / PSU-1).